The primary structure comprises 114 residues: uncharacterized protein (114 aa).

This is an uncharacterized protein from Bacillus subtilis (strain 168).